The sequence spans 116 residues: Thioredoxin (116 aa).

A Thioredoxin domain is found at 2–113 (TDSEKSATIK…LLRELSDVVP (112 aa)). Cysteine 37 and cysteine 40 are disulfide-bonded.

This sequence belongs to the thioredoxin family.

Participates in various redox reactions through the reversible oxidation of its active center dithiol to a disulfide and catalyzes dithiol-disulfide exchange reactions. The sequence is that of Thioredoxin (trxA) from Mycobacterium bovis (strain ATCC BAA-935 / AF2122/97).